Reading from the N-terminus, the 745-residue chain is Heterogeneous nuclear ribonucleoprotein U-like protein 2 (745 aa).

The SAP domain occupies 3–37 (VKRLKVTELRSELQRRGLDSRGLKMDLAQRLQEAL). Disordered regions lie at residues 44 to 239 (DEAG…DEEE) and 625 to 664 (EEAR…GQRR). Acidic residues predominate over residues 73–97 (GDEEEEDDDEEEDEEALLEDEDEEP). The span at 142-161 (GEEHDNGKGEEDGPEERSGD) shows a compositional bias: basic and acidic residues. Ser159 is modified (phosphoserine). Residue Thr163 is modified to Phosphothreonine. Residues Ser166, Ser183, Ser186, Ser224, and Ser226 each carry the phosphoserine modification. A compositionally biased stretch (basic and acidic residues) spans 183-221 (SEKSKPAGSDGERRGVKRQRDEKDEHGRAYYEFREEAYH). The region spanning 224-417 (SKSPPPPEEE…VELNFGQKEE (194 aa)) is the B30.2/SPRY domain. Residues 230–239 (PEEEAKDEEE) are compositionally biased toward acidic residues. Over residues 625-637 (EEARKLLPPSEKR) the composition is skewed to basic and acidic residues. Positions 638 to 652 (TNRRNNRNKRNRQNR) are enriched in basic residues. 4 positions are modified to omega-N-methylarginine: Arg654, Arg682, Arg736, and Arg745.

Binds to MLF1 and retains it in the nucleus.

Its subcellular location is the nucleus. This Mus musculus (Mouse) protein is Heterogeneous nuclear ribonucleoprotein U-like protein 2 (Hnrnpul2).